The primary structure comprises 213 residues: LexA repressor (213 aa).

Residues 27–47 (QTEIARAFGFKGVRAAQYHLE) constitute a DNA-binding region (H-T-H motif). Active-site for autocatalytic cleavage activity residues include Ser133 and Lys170.

The protein belongs to the peptidase S24 family. Homodimer.

It catalyses the reaction Hydrolysis of Ala-|-Gly bond in repressor LexA.. Its function is as follows. Represses a number of genes involved in the response to DNA damage (SOS response), including recA and lexA. In the presence of single-stranded DNA, RecA interacts with LexA causing an autocatalytic cleavage which disrupts the DNA-binding part of LexA, leading to derepression of the SOS regulon and eventually DNA repair. The polypeptide is LexA repressor (Xanthomonas campestris).